The chain runs to 559 residues: Formate--tetrahydrofolate ligase (559 aa).

68–75 (TPAGEGKS) is an ATP binding site.

It belongs to the formate--tetrahydrofolate ligase family.

The enzyme catalyses (6S)-5,6,7,8-tetrahydrofolate + formate + ATP = (6R)-10-formyltetrahydrofolate + ADP + phosphate. Its pathway is one-carbon metabolism; tetrahydrofolate interconversion. This is Formate--tetrahydrofolate ligase from Lactobacillus gasseri (strain ATCC 33323 / DSM 20243 / BCRC 14619 / CIP 102991 / JCM 1131 / KCTC 3163 / NCIMB 11718 / NCTC 13722 / AM63).